A 219-amino-acid polypeptide reads, in one-letter code: Cytochrome c biogenesis ATP-binding export protein CcmA (219 aa).

Positions I10–V218 constitute an ABC transporter domain. G42 to T49 contributes to the ATP binding site.

It belongs to the ABC transporter superfamily. CcmA exporter (TC 3.A.1.107) family. The complex is composed of two ATP-binding proteins (CcmA) and two transmembrane proteins (CcmB).

The protein resides in the cell inner membrane. The catalysed reaction is heme b(in) + ATP + H2O = heme b(out) + ADP + phosphate + H(+). In terms of biological role, part of the ABC transporter complex CcmAB involved in the biogenesis of c-type cytochromes; once thought to export heme, this seems not to be the case, but its exact role is uncertain. Responsible for energy coupling to the transport system. This is Cytochrome c biogenesis ATP-binding export protein CcmA from Colwellia psychrerythraea (strain 34H / ATCC BAA-681) (Vibrio psychroerythus).